We begin with the raw amino-acid sequence, 283 residues long: Gap junction alpha-6 protein (283 aa).

The Cytoplasmic segment spans residues 1–23 (MSDWSALHQLLEKVQPYSTAGGK). The helical transmembrane segment at 24 to 41 (VWIKVLFIFRILLLGTAI) threads the bilayer. Over 42 to 76 (ESAWSDEQFEFHCNTQQPGCENVCYDHAFPISHVR) the chain is Extracellular. Residues 77-99 (LWVLQVIFVSVPILLYLAHVYYV) traverse the membrane as a helical segment. Over 100–150 (VRQNKKLNKQEEELEAAHFNEASVERHLETIAGEQFKCGSEEQSKVKMRGR) the chain is Cytoplasmic. The helical transmembrane segment at 151 to 173 (LLLTYMASIFFKSVFEMAFLLIQ) threads the bilayer. The Extracellular segment spans residues 174–208 (WYIYGFTLSALYICEQSPCPRRVDCFLSRPTEKTI). The helical transmembrane segment at 209–231 (FILFMFVVSVVSFVLDIIELFYV) threads the bilayer. At 232–283 (LFKAIKNRMRKAEDEVYCDELPCPSHVSSSTVLTTIDSSEQAVPVELSSVCI) the chain is on the cytoplasmic side.

The protein belongs to the connexin family. Alpha-type (group II) subfamily. As to quaternary structure, a connexon is composed of a hexamer of connexins.

The protein resides in the cell membrane. Its subcellular location is the cell junction. It is found in the gap junction. In terms of biological role, one gap junction consists of a cluster of closely packed pairs of transmembrane channels, the connexons, through which materials of low MW diffuse from one cell to a neighboring cell. The sequence is that of Gap junction alpha-6 protein (Gja6) from Mus musculus (Mouse).